A 449-amino-acid chain; its full sequence is Probable glycine dehydrogenase (decarboxylating) subunit 1 (449 aa).

The protein belongs to the GcvP family. N-terminal subunit subfamily. The glycine cleavage system is composed of four proteins: P, T, L and H. In this organism, the P 'protein' is a heterodimer of two subunits.

It catalyses the reaction N(6)-[(R)-lipoyl]-L-lysyl-[glycine-cleavage complex H protein] + glycine + H(+) = N(6)-[(R)-S(8)-aminomethyldihydrolipoyl]-L-lysyl-[glycine-cleavage complex H protein] + CO2. Functionally, the glycine cleavage system catalyzes the degradation of glycine. The P protein binds the alpha-amino group of glycine through its pyridoxal phosphate cofactor; CO(2) is released and the remaining methylamine moiety is then transferred to the lipoamide cofactor of the H protein. The sequence is that of Probable glycine dehydrogenase (decarboxylating) subunit 1 from Solibacter usitatus (strain Ellin6076).